Consider the following 452-residue polypeptide: Protein FAM222A (452 aa).

It belongs to the FAM222 family.

The sequence is that of Protein FAM222A (FAM222A) from Homo sapiens (Human).